Consider the following 72-residue polypeptide: MAKEEVLEFPGVVTELLPNAMFRVKLENEHEIIAHTAGRMRKNRIRVLAGDKVLVEMTPYDLTKGRITYRFK.

The 72-residue stretch at 1–72 (MAKEEVLEFP…TKGRITYRFK (72 aa)) folds into the S1-like domain.

Belongs to the IF-1 family. As to quaternary structure, component of the 30S ribosomal translation pre-initiation complex which assembles on the 30S ribosome in the order IF-2 and IF-3, IF-1 and N-formylmethionyl-tRNA(fMet); mRNA recruitment can occur at any time during PIC assembly.

It localises to the cytoplasm. Functionally, one of the essential components for the initiation of protein synthesis. Stabilizes the binding of IF-2 and IF-3 on the 30S subunit to which N-formylmethionyl-tRNA(fMet) subsequently binds. Helps modulate mRNA selection, yielding the 30S pre-initiation complex (PIC). Upon addition of the 50S ribosomal subunit IF-1, IF-2 and IF-3 are released leaving the mature 70S translation initiation complex. This Brucella abortus (strain 2308) protein is Translation initiation factor IF-1.